We begin with the raw amino-acid sequence, 375 residues long: Probable G-protein coupled receptor 27 (375 aa).

Topologically, residues 1–23 are extracellular; sequence MANASEPGGSGGGEAAALGLKLA. N-linked (GlcNAc...) asparagine glycosylation occurs at Asn3. The chain crosses the membrane as a helical span at residues 24 to 44; it reads TLSLLLCVSLAGNVLFALLIV. Over 45–55 the chain is Cytoplasmic; the sequence is RERSLHRAPYY. The chain crosses the membrane as a helical span at residues 56–76; sequence LLLDLCLADGLRALACLPAVM. At 77-97 the chain is on the extracellular side; it reads LAARRAAAAAGAPPGALGCKL. Cys95 and Cys171 are disulfide-bonded. The chain crosses the membrane as a helical span at residues 98-118; that stretch reads LAFLAALFCFHAAFLLLGVGV. Residues 119–139 lie on the Cytoplasmic side of the membrane; it reads TRYLAIAHHRFYAERLAGWPC. A helical membrane pass occupies residues 140–160; sequence AAMLVCAAWALALAAAFPPVL. Over 161-181 the chain is Extracellular; it reads DGGGDDEDAPCALEQRPDGAP. The helical transmembrane segment at 182–202 threads the bilayer; the sequence is GALGFLLLLAVVVGATHLVYL. Over 203-285 the chain is Cytoplasmic; that stretch reads RLLFFIHDRR…FKTEKRLCKM (83 aa). A helical transmembrane segment spans residues 286-306; that stretch reads FYAVTLLFLLLWGPYVVASYL. Over 307–320 the chain is Extracellular; it reads RVLVRPGAVPQAYL. A helical transmembrane segment spans residues 321-341; that stretch reads TASVWLTFAQAGINPVVCFLF. At 342 to 375 the chain is on the cytoplasmic side; sequence NRELRDCFRAQFPCCQSPRTTQATHPCDLKGIGL.

Belongs to the G-protein coupled receptor 1 family. As to expression, highly expressed as a 3.0 kb transcript in brain, ovary, testis, heart, prostate and peripheral Leukocytes. Lower levels in pancreas and small intestine. A 2.3 kb transcript was also found in peripheral Leukocytes. In brain regions, detected as a 3.0 kb transcript in all regions tested. Highest levels in the caudate nucleus, putamen, hippocampus and subthalamic nucleus. Lowest level in the cerebellum.

The protein resides in the cell membrane. Its function is as follows. Orphan receptor. Possible candidate for amine-like G-protein coupled receptor. The chain is Probable G-protein coupled receptor 27 (GPR27) from Homo sapiens (Human).